A 586-amino-acid polypeptide reads, in one-letter code: Anaerobic glycerol-3-phosphate dehydrogenase subunit A1 (586 aa).

Residue 6 to 34 (SVLVIGGGSTGTGIARDLAMRGLDVTLVE) coordinates FAD. Residues 559–586 (GGAVADGGRERAADRADDDALGGADGDN) form a disordered region. Over residues 574 to 586 (ADDDALGGADGDN) the composition is skewed to acidic residues.

The protein belongs to the FAD-dependent glycerol-3-phosphate dehydrogenase family. Composed of a catalytic GlpA/B dimer and of membrane bound GlpC. The cofactor is FAD. It depends on FMN as a cofactor.

It is found in the cell membrane. The catalysed reaction is a quinone + sn-glycerol 3-phosphate = dihydroxyacetone phosphate + a quinol. Its pathway is polyol metabolism; glycerol degradation via glycerol kinase pathway; glycerone phosphate from sn-glycerol 3-phosphate (anaerobic route): step 1/1. Up-regulated by glycerol and no inhibition by glucose. Functionally, conversion of glycerol 3-phosphate to dihydroxyacetone phosphate. Required for growth on glycerol and for glycerol metabolism. In Haloferax volcanii (strain ATCC 29605 / DSM 3757 / JCM 8879 / NBRC 14742 / NCIMB 2012 / VKM B-1768 / DS2) (Halobacterium volcanii), this protein is Anaerobic glycerol-3-phosphate dehydrogenase subunit A1 (gpdA1).